Consider the following 281-residue polypeptide: MEANTRSTGRLPAAFLTPGSSSFMDFLSEHQPEILPGNRQLPPTQGVIEAPHGTTIVATTFPGGVVLAGDRRATMGNVIAQRDIEKVFPADEYSAVGIAGTAGLAVEMVKLFQLELEHFEKVEGATLSLEGKANRLSTMIRSNLAMAMQGLAVVPLFAGYDVDREKGRIFSYDVTGGRSEEHGYASTGSGSIFARGAMKKLYRDDLTEQQATTLVIQALYDAADDDSATGGPDVARRIYPIVTVITEDGFRRLTDEESSEIARAILERRLEQPDGPRAALL.

The propeptide at 1-53 is removed in mature form; by autocatalysis; the sequence is MEANTRSTGRLPAAFLTPGSSSFMDFLSEHQPEILPGNRQLPPTQGVIEAPHG. Thr54 serves as the catalytic Nucleophile.

The protein belongs to the peptidase T1B family. As to quaternary structure, the 20S proteasome core is composed of 14 alpha and 14 beta subunits that assemble into four stacked heptameric rings, resulting in a barrel-shaped structure. The two inner rings, each composed of seven catalytic beta subunits, are sandwiched by two outer rings, each composed of seven alpha subunits. The catalytic chamber with the active sites is on the inside of the barrel. Has a gated structure, the ends of the cylinder being occluded by the N-termini of the alpha-subunits. Is capped by the proteasome-associated ATPase, ARC.

It is found in the cytoplasm. The catalysed reaction is Cleavage of peptide bonds with very broad specificity.. The protein operates within protein degradation; proteasomal Pup-dependent pathway. With respect to regulation, the formation of the proteasomal ATPase ARC-20S proteasome complex, likely via the docking of the C-termini of ARC into the intersubunit pockets in the alpha-rings, may trigger opening of the gate for substrate entry. Interconversion between the open-gate and close-gate conformations leads to a dynamic regulation of the 20S proteasome proteolysis activity. Component of the proteasome core, a large protease complex with broad specificity involved in protein degradation. This chain is Proteasome subunit beta 2, found in Streptomyces avermitilis (strain ATCC 31267 / DSM 46492 / JCM 5070 / NBRC 14893 / NCIMB 12804 / NRRL 8165 / MA-4680).